A 172-amino-acid polypeptide reads, in one-letter code: Peptide methionine sulfoxide reductase MsrA (172 aa).

Residue C12 is part of the active site.

The protein belongs to the MsrA Met sulfoxide reductase family.

The catalysed reaction is L-methionyl-[protein] + [thioredoxin]-disulfide + H2O = L-methionyl-(S)-S-oxide-[protein] + [thioredoxin]-dithiol. The enzyme catalyses [thioredoxin]-disulfide + L-methionine + H2O = L-methionine (S)-S-oxide + [thioredoxin]-dithiol. Its function is as follows. Has an important function as a repair enzyme for proteins that have been inactivated by oxidation. Catalyzes the reversible oxidation-reduction of methionine sulfoxide in proteins to methionine. This chain is Peptide methionine sulfoxide reductase MsrA, found in Ligilactobacillus salivarius (strain UCC118) (Lactobacillus salivarius).